A 1879-amino-acid chain; its full sequence is Protein TIC 214 (1879 aa).

The next 6 membrane-spanning stretches (helical) occupy residues 18–38 (IINSVVVVGLYYGFLTTFSIG), 67–87 (FITGQLMMFISIYYAPLHLAL), 90–110 (PHTITVLALPYLLFHFFWNNH), 127–147 (LSIQCVFLNNLIFQLFNHFIL), 175–195 (VGWLIGHILFMKWVGLVLVWI), and 218–238 (IFSILLFITCVYYLGRIPSPI). Residues 243 to 291 (LKETEERGESEEERDVEKTSETKGTKQEQEGSTEEDPSPSLFSEEKEDP) form a disordered region. Residues 257–271 (DVEKTSETKGTKQEQ) are compositionally biased toward basic and acidic residues.

It belongs to the TIC214 family. In terms of assembly, part of the Tic complex.

The protein localises to the plastid. It localises to the chloroplast inner membrane. In terms of biological role, involved in protein precursor import into chloroplasts. May be part of an intermediate translocation complex acting as a protein-conducting channel at the inner envelope. The sequence is that of Protein TIC 214 from Morus indica (Mulberry).